A 308-amino-acid chain; its full sequence is MNPSTQIVVKMSNEELWKERYPNMEMISNSKRITPIFPEIKFKISGLEENSRYVLVLSLEKMDNIRYGINENKEWAPSSARKPKPHHNMKFFFHPEGTKLGKELMAETVEFTSVRITTSEKLSEKENVFYVHTMHKYVPVLTIRNLTTGEIASNIFKMEIAQFFPVSIYQQASMGRWKSDLNKHSTFGNRSEGGIKRKTSDAAGQLPSKRSSKKPVKKDVVDNSEVTLEVKTSQYLVNQNESNLTEYIPSSPLYSSQNQYQYPFHPYSPFDSSIPYPYSPMDYSYYFNPTFQSFSPENVYFDENRNPH.

A DNA-binding region (T-box) is located at residues 11–192 (MSNEELWKER…KHSTFGNRSE (182 aa)). The interval 186–220 (TFGNRSEGGIKRKTSDAAGQLPSKRSSKKPVKKDV) is disordered.

It is found in the nucleus. Its function is as follows. Involved in the regulatory network to control embryonic patterning and morphogenesis. Implicated in negatively regulating vab-7 expression at the anterior of embryos. This is Putative T-box protein 30/42 (tbx-30) from Caenorhabditis elegans.